Here is a 385-residue protein sequence, read N- to C-terminus: Xanthosine methyltransferase 2 (385 aa).

Tyrosine 18 is a binding site for S-adenosyl-L-homocysteine. Xanthosine contacts are provided by asparagine 21 and asparagine 25. Residues cysteine 62, asparagine 67, aspartate 101, leucine 102, serine 140, phenylalanine 141, and cysteine 157 each coordinate S-adenosyl-L-homocysteine. A xanthosine-binding site is contributed by tyrosine 158. Cysteine 159 provides a ligand contact to S-adenosyl-L-homocysteine. Xanthosine contacts are provided by histidine 161 and tryptophan 162. Mg(2+) is bound by residues asparagine 179, aspartate 261, phenylalanine 263, and asparagine 264. Residues serine 329, tyrosine 334, and tyrosine 369 each coordinate xanthosine.

Belongs to the methyltransferase superfamily. Type-7 methyltransferase family. Requires Mg(2+) as cofactor. In terms of tissue distribution, expressed at low levels in young leaves but not in mature leaves. Barely detectable in fruits (grains).

The catalysed reaction is xanthosine + S-adenosyl-L-methionine = 7-methylxanthosine + S-adenosyl-L-homocysteine. It functions in the pathway alkaloid biosynthesis. Functionally, involved in the biosynthesis of caffeine. Specific for xanthosine and could not use xanthosine 5'-monophosphate (XMP) as substrate. Catalyzes the 7-N-methylation activity of xanthosine, but does not have 1-N- or 3-N-methylation activity. The polypeptide is Xanthosine methyltransferase 2 (Coffea arabica (Arabian coffee)).